The sequence spans 432 residues: D-amino acid dehydrogenase (432 aa).

3-17 (VVILGSGVVGVTSAW) provides a ligand contact to FAD.

The protein belongs to the DadA oxidoreductase family. Requires FAD as cofactor.

It catalyses the reaction a D-alpha-amino acid + A + H2O = a 2-oxocarboxylate + AH2 + NH4(+). It functions in the pathway amino-acid degradation; D-alanine degradation; NH(3) and pyruvate from D-alanine: step 1/1. Oxidative deamination of D-amino acids. In Salmonella choleraesuis (strain SC-B67), this protein is D-amino acid dehydrogenase.